The following is a 343-amino-acid chain: Uroporphyrinogen decarboxylase (343 aa).

Residues 23–27, D73, Y151, S206, and H322 contribute to the substrate site; that span reads RQAGR.

It belongs to the uroporphyrinogen decarboxylase family. As to quaternary structure, homodimer.

It is found in the cytoplasm. It carries out the reaction uroporphyrinogen III + 4 H(+) = coproporphyrinogen III + 4 CO2. Its pathway is porphyrin-containing compound metabolism; protoporphyrin-IX biosynthesis; coproporphyrinogen-III from 5-aminolevulinate: step 4/4. Its function is as follows. Catalyzes the decarboxylation of four acetate groups of uroporphyrinogen-III to yield coproporphyrinogen-III. The sequence is that of Uroporphyrinogen decarboxylase from Granulibacter bethesdensis (strain ATCC BAA-1260 / CGDNIH1).